The following is a 577-amino-acid chain: F-box/TPR repeat protein pof3 (577 aa).

TPR repeat units follow at residues 6-39 (VKAI…EPNP), 41-74 (IDLF…NARN), and 76-108 (RGYL…VHKM). The F-box domain maps to 138-180 (ILPREVLLCILQQLNFKSIVQCMQVCKHWRDCIKKEPSLFCCL).

In terms of assembly, a part of the E3 ubiquitin ligase Skp1-Cullin-1-F-box (SCF) complex. Interacts with cul1, mcl1 and skp1.

It is found in the mitochondrion. It localises to the nucleus. Its function is as follows. Has a role in substrate recognition in the Skp1-Cullin-1/Cdc53-F-box (SCF) ubiquitin ligase complex. Required for the maintenance of telomere length and transcriptional silencing at the telomere. Also required for chromosome segregation. The chain is F-box/TPR repeat protein pof3 (pof3) from Schizosaccharomyces pombe (strain 972 / ATCC 24843) (Fission yeast).